A 170-amino-acid polypeptide reads, in one-letter code: Nucleoside-triphosphatase THEP1 (170 aa).

Residues 7 to 14 (GMPGVGKT) and 98 to 105 (IIIIDELG) each bind ATP.

The protein belongs to the THEP1 NTPase family.

The catalysed reaction is a ribonucleoside 5'-triphosphate + H2O = a ribonucleoside 5'-diphosphate + phosphate + H(+). Its function is as follows. Has nucleotide phosphatase activity towards ATP, GTP, CTP, TTP and UTP. May hydrolyze nucleoside diphosphates with lower efficiency. The chain is Nucleoside-triphosphatase THEP1 from Methanocaldococcus jannaschii (strain ATCC 43067 / DSM 2661 / JAL-1 / JCM 10045 / NBRC 100440) (Methanococcus jannaschii).